Consider the following 218-residue polypeptide: Capsid protein (218 aa).

Methionine 1 carries the N-acetylmethionine; by host modification. Positions 1–28 (MDKSESTSAGRNRRRRPRRGSRSAPSSA) are disordered. Over residues 11 to 21 (RNRRRRPRRGS) the composition is skewed to basic residues.

This sequence belongs to the cucumovirus capsid protein family.

The protein localises to the virion. Its function is as follows. Capsid protein. Probably binds RNA and plays a role in packaging. This Cucumis sativus (Cucumber) protein is Capsid protein.